A 368-amino-acid chain; its full sequence is Membrane glycoprotein UL18 (368 aa).

The N-terminal stretch at 1–19 is a signal peptide; it reads MMTMWCLTLFVLWMLRVVG. A helical transmembrane segment spans residues 326 to 346; the sequence is ISSVLLALLLCALLFAFLHYF.

In terms of assembly, interacts with host LILRB1.

Its subcellular location is the host membrane. In terms of biological role, plays a role in the protection against host NK cell cytotoxicity by interacting with and modulating the activity of the host inhibitory leukocyte Ig-like receptor 1/LILRB1, which is expressed on monocytes, dendritic cells, as well as subsets of T and NK cells. UL18 exerts an inhibitory effect on LIR-1+ NK cells, while it stimulates LIR-1- NK cell. In Homo sapiens (Human), this protein is Membrane glycoprotein UL18 (UL18).